The following is a 142-amino-acid chain: Large ribosomal subunit protein uL22c (142 aa).

It belongs to the universal ribosomal protein uL22 family. Part of the 50S ribosomal subunit.

The protein localises to the plastid. Its subcellular location is the chloroplast. Its function is as follows. This protein binds specifically to 23S rRNA. The globular domain of the protein is located near the polypeptide exit tunnel on the outside of the subunit, while an extended beta-hairpin is found that lines the wall of the exit tunnel in the center of the 70S ribosome. In Pinus koraiensis (Korean pine), this protein is Large ribosomal subunit protein uL22c (rpl22).